The chain runs to 356 residues: Peptide chain release factor 1 (356 aa).

Position 233 is an N5-methylglutamine (Q233).

Belongs to the prokaryotic/mitochondrial release factor family. In terms of processing, methylated by PrmC. Methylation increases the termination efficiency of RF1.

The protein localises to the cytoplasm. Peptide chain release factor 1 directs the termination of translation in response to the peptide chain termination codons UAG and UAA. The sequence is that of Peptide chain release factor 1 from Symbiobacterium thermophilum (strain DSM 24528 / JCM 14929 / IAM 14863 / T).